The primary structure comprises 348 residues: D-alanine--D-alanine ligase (348 aa).

Residues 132 to 334 (KRILEVAGVP…YSDLIKELVV (203 aa)) form the ATP-grasp domain. 162–217 (LEKLTFPVFVKPANMGSSVGISKAENESELRSAIDLALKYDSRILIEQGVVAREIE) contacts ATP. Mg(2+) is bound by residues Asp288, Glu301, and Asn303.

The protein belongs to the D-alanine--D-alanine ligase family. The cofactor is Mg(2+). Requires Mn(2+) as cofactor.

It localises to the cytoplasm. It catalyses the reaction 2 D-alanine + ATP = D-alanyl-D-alanine + ADP + phosphate + H(+). It participates in cell wall biogenesis; peptidoglycan biosynthesis. In terms of biological role, cell wall formation. The chain is D-alanine--D-alanine ligase from Streptococcus thermophilus (strain ATCC BAA-250 / LMG 18311).